Reading from the N-terminus, the 397-residue chain is Argininosuccinate synthase (397 aa).

An ATP-binding site is contributed by 8-16; the sequence is AYSGGLDTS. Positions 86 and 91 each coordinate L-citrulline. Residue Gly-116 participates in ATP binding. L-aspartate-binding residues include Thr-118, Asn-122, and Asp-123. Residue Asn-122 participates in L-citrulline binding. The L-citrulline site is built by Arg-126, Ser-175, Ser-184, Glu-260, and Tyr-272.

It belongs to the argininosuccinate synthase family. Type 1 subfamily. As to quaternary structure, homotetramer.

It localises to the cytoplasm. It catalyses the reaction L-citrulline + L-aspartate + ATP = 2-(N(omega)-L-arginino)succinate + AMP + diphosphate + H(+). It participates in amino-acid biosynthesis; L-arginine biosynthesis; L-arginine from L-ornithine and carbamoyl phosphate: step 2/3. The protein is Argininosuccinate synthase of Clostridium botulinum (strain ATCC 19397 / Type A).